The sequence spans 421 residues: Probable tRNA N6-adenosine threonylcarbamoyltransferase, mitochondrial (421 aa).

The N-terminal 22 residues, 1–22, are a transit peptide targeting the mitochondrion; sequence MNIPKILNNNLVLKRIFCRNYS. The a divalent metal cation site is built by histidine 133 and histidine 137. Substrate contacts are provided by residues 156-160, aspartate 189, glycine 208, glutamate 212, 308-309, and threonine 336; these read LLSGG and AN. Aspartate 337 is a binding site for a divalent metal cation.

Belongs to the KAE1 / TsaD family. In terms of assembly, homodimer. The cofactor is a divalent metal cation.

Its subcellular location is the mitochondrion. The enzyme catalyses L-threonylcarbamoyladenylate + adenosine(37) in tRNA = N(6)-L-threonylcarbamoyladenosine(37) in tRNA + AMP + H(+). Functionally, required for the formation of a threonylcarbamoyl group on adenosine at position 37 (t(6)A37) in mitochondrial tRNAs that read codons beginning with adenine. Probably involved in the transfer of the threonylcarbamoyl moiety of threonylcarbamoyl-AMP (TC-AMP) to the N6 group of A37. Involved in mitochondrial genome maintenance. The sequence is that of Probable tRNA N6-adenosine threonylcarbamoyltransferase, mitochondrial from Caenorhabditis elegans.